The chain runs to 242 residues: Glucosamine-6-phosphate deaminase (242 aa).

Aspartate 67 functions as the Proton acceptor; for enolization step in the catalytic mechanism. The For ring-opening step role is filled by asparagine 136. Histidine 138 serves as the catalytic Proton acceptor; for ring-opening step. Glutamate 143 serves as the catalytic For ring-opening step.

It belongs to the glucosamine/galactosamine-6-phosphate isomerase family. NagB subfamily.

It catalyses the reaction alpha-D-glucosamine 6-phosphate + H2O = beta-D-fructose 6-phosphate + NH4(+). The protein operates within amino-sugar metabolism; N-acetylneuraminate degradation; D-fructose 6-phosphate from N-acetylneuraminate: step 5/5. Its function is as follows. Catalyzes the reversible isomerization-deamination of glucosamine 6-phosphate (GlcN6P) to form fructose 6-phosphate (Fru6P) and ammonium ion. In Clostridium perfringens (strain SM101 / Type A), this protein is Glucosamine-6-phosphate deaminase.